A 248-amino-acid chain; its full sequence is MNPIFLGLNIDHVATLRQARGTRYPDPVKAALDAEMAGADSITLHLREDRRHIQDADVYRLSELRQTKINLEMAATQEMLEIALKCQPEDVCLVPEKREELTTEGGLDVASQKAWLTDYCAQLAENKTRVSLFIDADDAQIHAAKEVGAPVIEIHTGTYAELTDPAAIKTELERIRKATDLAVSLGLTVNAGHGLHYHNVQAIAAIKEIEELNIGHAIIAQAIFSGLPDAVSEMKRLMVDARQQAYLG.

Asn-9 lines the 3-amino-2-oxopropyl phosphate pocket. 11-12 (DH) contributes to the 1-deoxy-D-xylulose 5-phosphate binding site. Arg-20 contributes to the 3-amino-2-oxopropyl phosphate binding site. His-45 (proton acceptor) is an active-site residue. 2 residues coordinate 1-deoxy-D-xylulose 5-phosphate: Arg-47 and His-52. The Proton acceptor role is filled by Glu-72. 1-deoxy-D-xylulose 5-phosphate is bound at residue Thr-102. His-193 functions as the Proton donor in the catalytic mechanism. Residues Gly-194 and 215–216 (GH) contribute to the 3-amino-2-oxopropyl phosphate site.

Belongs to the PNP synthase family. As to quaternary structure, homooctamer; tetramer of dimers.

It localises to the cytoplasm. The catalysed reaction is 3-amino-2-oxopropyl phosphate + 1-deoxy-D-xylulose 5-phosphate = pyridoxine 5'-phosphate + phosphate + 2 H2O + H(+). It participates in cofactor biosynthesis; pyridoxine 5'-phosphate biosynthesis; pyridoxine 5'-phosphate from D-erythrose 4-phosphate: step 5/5. In terms of biological role, catalyzes the complicated ring closure reaction between the two acyclic compounds 1-deoxy-D-xylulose-5-phosphate (DXP) and 3-amino-2-oxopropyl phosphate (1-amino-acetone-3-phosphate or AAP) to form pyridoxine 5'-phosphate (PNP) and inorganic phosphate. In Hydrogenovibrio crunogenus (strain DSM 25203 / XCL-2) (Thiomicrospira crunogena), this protein is Pyridoxine 5'-phosphate synthase.